A 335-amino-acid chain; its full sequence is Sphingomyelinase C (335 aa).

A signal peptide spans 1-28 (MEKFKIIKTIPKICGAFIFLLFFTFLFG).

It belongs to the neutral sphingomyelinase family.

The protein localises to the secreted. It carries out the reaction a sphingomyelin + H2O = phosphocholine + an N-acylsphing-4-enine + H(+). Its function is as follows. Virulence factor that promotes intracellular proliferation by mediating the disruption of the phagocytic vacuole and the release of bacteria into the host cell cytosol. May act in concert with the phospholipases PlcA and PlcB and the hemolysin hly to mediate efficient escape from the vacuole. The protein is Sphingomyelinase C (smcL) of Listeria ivanovii.